A 216-amino-acid chain; its full sequence is Transmembrane emp24 domain-containing protein eca (216 aa).

The signal sequence occupies residues 1–20; the sequence is MRDQWICLALVLCALHSACG. Over 21–183 the chain is Lumenal; that stretch reads LYFHISETER…RHTSESTNSR (163 aa). The GOLD domain occupies 30–126; that stretch reads RKCFIEEVPD…QLRVHLDIQV (97 aa). A coiled-coil region spans residues 134-164; that stretch reads ANVAQKEKLTELQLRIRQLLDQVEQITKEQN. A helical transmembrane segment spans residues 184–203; that stretch reads VLWWSLAQTVVLVCMGFWQM. The Cytoplasmic portion of the chain corresponds to 204-216; that stretch reads RHLKSFFEAKKLV. The Prevents secretion from ER signature appears at 213–216; that stretch reads KKLV.

Belongs to the EMP24/GP25L family.

Its subcellular location is the endoplasmic reticulum membrane. Its function is as follows. Eca and bai are essential, though not redundant, for dorsoventral patterning of the embryo. Specifically required during early embryogenesis for the activity of maternal tkv, while the zygotic tkv is not affected. In Drosophila mojavensis (Fruit fly), this protein is Transmembrane emp24 domain-containing protein eca.